The following is a 196-amino-acid chain: UMP-CMP kinase (196 aa).

Residue 13–18 coordinates ATP; the sequence is GAGKGT. Ser-33 bears the Phosphoserine mark. The tract at residues 33–63 is NMP; sequence SAGELLRDERKNPDSQYGELIEKYIKDGKIV. Arg-39 is a binding site for a ribonucleoside 5'-phosphate. Residues Lys-43 and Lys-55 each carry the N6-acetyllysine modification. Residues 61–63 and 93–96 contribute to the a ribonucleoside 5'-phosphate site; these read KIV and GFPR. Asn-100 is a binding site for CMP. Lys-106 is subject to N6-succinyllysine. Positions 133-143 are LID; it reads ERGKSSGRSDD. Arg-134 contributes to the ATP binding site. The a ribonucleoside 5'-phosphate site is built by Arg-140 and Arg-151. Lys-179 contributes to the ATP binding site. Ser-180 carries the post-translational modification Phosphoserine.

The protein belongs to the adenylate kinase family. UMP-CMP kinase subfamily. As to quaternary structure, monomer. Requires Mg(2+) as cofactor.

The protein localises to the nucleus. It localises to the cytoplasm. The enzyme catalyses CMP + ATP = CDP + ADP. It carries out the reaction dCMP + ATP = dCDP + ADP. The catalysed reaction is UMP + ATP = UDP + ADP. It catalyses the reaction a 2'-deoxyribonucleoside 5'-diphosphate + ATP = a 2'-deoxyribonucleoside 5'-triphosphate + ADP. The enzyme catalyses a ribonucleoside 5'-diphosphate + ATP = a ribonucleoside 5'-triphosphate + ADP. Catalyzes the phosphorylation of pyrimidine nucleoside monophosphates at the expense of ATP. Plays an important role in de novo pyrimidine nucleotide biosynthesis. Has preference for UMP and CMP as phosphate acceptors. Also displays broad nucleoside diphosphate kinase activity. This Bos taurus (Bovine) protein is UMP-CMP kinase.